Consider the following 349-residue polypeptide: Ribosomal RNA large subunit methyltransferase M (349 aa).

S-adenosyl-L-methionine-binding positions include Ser183, 216–219 (APGG), Asp235, Asp255, and Asp271. The Proton acceptor role is filled by Lys300.

This sequence belongs to the class I-like SAM-binding methyltransferase superfamily. RNA methyltransferase RlmE family. RlmM subfamily. Monomer.

The protein localises to the cytoplasm. The catalysed reaction is cytidine(2498) in 23S rRNA + S-adenosyl-L-methionine = 2'-O-methylcytidine(2498) in 23S rRNA + S-adenosyl-L-homocysteine + H(+). Its function is as follows. Catalyzes the 2'-O-methylation at nucleotide C2498 in 23S rRNA. This is Ribosomal RNA large subunit methyltransferase M from Stutzerimonas stutzeri (strain A1501) (Pseudomonas stutzeri).